A 365-amino-acid polypeptide reads, in one-letter code: MRRHWLLVGACGWVLLILMFVSKFINFSFRIPGDYAGRSEIFVWTLSSVTTKLPSVVWPEKGASQPYILSSVSPSVVEPIDWHLVNEKRLEQLSTVCSNSSIWNLTHTTVRKFVLDRIFVCDKHKILFCQTPKVGNTQWKKVLIVLNGKFSKVEAIPENLVHDHERNGLPRLSSMTDTEIHQRLNSYFKFFIVRDPFERLISAFKDKFVKNPRFEPWYKHDIAPAIVRKYRRSHHDDSESVGLRFEDFVRYLGDKTGRQHLDRQFGDHIIHWLTYAELCAPCDISYNVVGHHETLELDAPYILKSAGIAGLVSYPSIPPGITRYNRTKVERYFSGISQRDIRRLYARYQGDFSLFDYPKPAFLLN.

At 1–6 (MRRHWL) the chain is on the cytoplasmic side. The helical; Signal-anchor for type II membrane protein transmembrane segment at 7 to 27 (LVGACGWVLLILMFVSKFINF) threads the bilayer. At 28–356 (SFRIPGDYAG…RYQGDFSLFD (329 aa)) the chain is on the lumenal side. N-linked (GlcNAc...) asparagine glycosylation is found at N99 and N104. 3'-phosphoadenylyl sulfate-binding positions include 132-138 (PKVGNTQ) and 194-202 (RDPFERLIS). N-linked (GlcNAc...) asparagine glycosylation occurs at N325.

It belongs to the sulfotransferase 2 family.

It is found in the golgi apparatus membrane. Functionally, catalyzes the transfer of sulfate to position 3 of terminal glucuronic acid of both protein- and lipid-linked oligosaccharides. Participates in biosynthesis of HNK-1 carbohydrate structure, a sulfated glucuronyl-lactosaminyl residue carried by many neural recognition molecules. The chain is Carbohydrate sulfotransferase 10 (chst10) from Danio rerio (Zebrafish).